We begin with the raw amino-acid sequence, 66 residues long: MPT51 antigen (66 aa).

The signal sequence occupies residues 1–38 (MTVVRGVSALLRVFCIAMLAAGLGVALQPAAVTGAARA).

The protein belongs to the mycobacterial A85 antigen family. In terms of assembly, homodimer.

Its subcellular location is the secreted. Its function is as follows. May have a role in host tissue attachment, whereby ligands may include the serum protein fibronectin and small sugars. The polypeptide is MPT51 antigen (mpt51) (Mycobacterium avium).